A 257-amino-acid polypeptide reads, in one-letter code: Zinc transporter ZupT (257 aa).

Helical transmembrane passes span 5-25, 32-52, 61-81, 109-129, 137-157, 171-191, 195-215, and 236-256; these read LILT…GVLG, VLAF…LMEM, GMSP…YFGL, AILL…ATFV, LGFG…LAVA, IFWA…AWLI, LVSP…MVAL, and GVLC…TIGI. Residues Asn-120 and Glu-123 each coordinate Fe(2+). The Zn(2+) site is built by Glu-123 and His-148. Residues Asn-149, Glu-152, and Glu-181 each coordinate Fe(2+). A Zn(2+)-binding site is contributed by Glu-152.

This sequence belongs to the ZIP transporter (TC 2.A.5) family. ZupT subfamily.

It is found in the cell inner membrane. The enzyme catalyses Zn(2+)(in) = Zn(2+)(out). In terms of biological role, mediates zinc uptake. May also transport other divalent cations. This Salmonella heidelberg (strain SL476) protein is Zinc transporter ZupT.